Here is a 510-residue protein sequence, read N- to C-terminus: MFIEKFKVESPNVKYTEDEIHSVYNYETTELVHENKNGSYQWTVKPKTVQYEFKTDIHVPKLGVMLVGWGGNNGSTLTGGVIANREGISWATKDKVQQANYFGSLTQASSIRVGSFNGEEIYAPFKSLLPMVNPDDIVFGGWDISDMNLADAMARAKVFDFDLQKQLRPYMESMVPLPGIYDPDFIAANQDSRANNVIKGTKKEQVQQIIKDIREFKEKNKVDKVVVLWTANTERYSNIVVGLNDTMENLLAAVEKDESEISPSTLYALACIYENIPFINGSPQNTFVPGLVDLAIKRNSLIGGDDFKSGQTKMKSVLVDFLVGAGIKPTSIVSYNHLGNNDGMNLSAPQTFRSKEISKSNVVDDMVSSNGILYEPGEHPDHVVVIKYVPYVGDSKRAMDEYTSEIFMGGKNTIVLHNTCEDSLLAAPIILDLVLLAELSTRIQLKGEAEGKFHSFHPVATILSYLTKAPLVPPGTPVVNALSKQRAMLENILRACVGLAPENNMILEYK.

NAD(+) contacts are provided by glycine 70, glycine 71, asparagine 72, asparagine 73, aspartate 143, isoleucine 180, glutamine 190, arginine 193, threonine 230, alanine 231, asparagine 232, threonine 233, glycine 281, serine 282, aspartate 306, serine 309, asparagine 340, asparagine 341, aspartate 342, lysine 355, glycine 393, aspartate 394, aspartate 422, and serine 423.

This sequence belongs to the myo-inositol 1-phosphate synthase family. Requires NAD(+) as cofactor.

It is found in the cytoplasm. The protein resides in the cytosol. It localises to the nucleus. It catalyses the reaction D-glucose 6-phosphate = 1D-myo-inositol 3-phosphate. Its pathway is polyol metabolism; myo-inositol biosynthesis; myo-inositol from D-glucose 6-phosphate: step 1/2. In terms of biological role, key enzyme in myo-inositol biosynthesis pathway that catalyzes the conversion of glucose 6-phosphate to 1-myo-inositol 1-phosphate in a NAD-dependent manner. May play a role in oxidative stress resistance and influences ascorbate levels. This is Inositol-3-phosphate synthase 1 from Populus euphratica (Euphrates poplar).